The following is a 234-amino-acid chain: Thiamine-phosphate synthase (234 aa).

Residues 52–56 (QYRSK) and N84 each bind 4-amino-2-methyl-5-(diphosphooxymethyl)pyrimidine. Residues D85 and D104 each coordinate Mg(2+). 4-amino-2-methyl-5-(diphosphooxymethyl)pyrimidine is bound at residue S123. Residue 150-152 (SVT) participates in 2-[(2R,5Z)-2-carboxy-4-methylthiazol-5(2H)-ylidene]ethyl phosphate binding. K153 is a 4-amino-2-methyl-5-(diphosphooxymethyl)pyrimidine binding site. Residue G180 participates in 2-[(2R,5Z)-2-carboxy-4-methylthiazol-5(2H)-ylidene]ethyl phosphate binding.

It belongs to the thiamine-phosphate synthase family. Mg(2+) is required as a cofactor.

It carries out the reaction 2-[(2R,5Z)-2-carboxy-4-methylthiazol-5(2H)-ylidene]ethyl phosphate + 4-amino-2-methyl-5-(diphosphooxymethyl)pyrimidine + 2 H(+) = thiamine phosphate + CO2 + diphosphate. The catalysed reaction is 2-(2-carboxy-4-methylthiazol-5-yl)ethyl phosphate + 4-amino-2-methyl-5-(diphosphooxymethyl)pyrimidine + 2 H(+) = thiamine phosphate + CO2 + diphosphate. The enzyme catalyses 4-methyl-5-(2-phosphooxyethyl)-thiazole + 4-amino-2-methyl-5-(diphosphooxymethyl)pyrimidine + H(+) = thiamine phosphate + diphosphate. The protein operates within cofactor biosynthesis; thiamine diphosphate biosynthesis; thiamine phosphate from 4-amino-2-methyl-5-diphosphomethylpyrimidine and 4-methyl-5-(2-phosphoethyl)-thiazole: step 1/1. Its function is as follows. Condenses 4-methyl-5-(beta-hydroxyethyl)thiazole monophosphate (THZ-P) and 2-methyl-4-amino-5-hydroxymethyl pyrimidine pyrophosphate (HMP-PP) to form thiamine monophosphate (TMP). In Nitrosospira multiformis (strain ATCC 25196 / NCIMB 11849 / C 71), this protein is Thiamine-phosphate synthase.